Here is a 231-residue protein sequence, read N- to C-terminus: 2,3,4,5-tetrahydropyridine-2,6-dicarboxylate N-acetyltransferase (231 aa).

This sequence belongs to the transferase hexapeptide repeat family. DapH subfamily.

The enzyme catalyses (S)-2,3,4,5-tetrahydrodipicolinate + acetyl-CoA + H2O = L-2-acetamido-6-oxoheptanedioate + CoA. It participates in amino-acid biosynthesis; L-lysine biosynthesis via DAP pathway; LL-2,6-diaminopimelate from (S)-tetrahydrodipicolinate (acetylase route): step 1/3. In terms of biological role, catalyzes the transfer of an acetyl group from acetyl-CoA to tetrahydrodipicolinate. This chain is 2,3,4,5-tetrahydropyridine-2,6-dicarboxylate N-acetyltransferase, found in Thermosipho melanesiensis (strain DSM 12029 / CIP 104789 / BI429).